The sequence spans 201 residues: Inosine triphosphate pyrophosphatase (201 aa).

ITP is bound at residue 16–21 (TGNAKK). Glutamate 44 contacts Mg(2+). ITP contacts are provided by residues lysine 56, 72 to 73 (DT), lysine 89, 148 to 151 (FGWD), lysine 171, and 176 to 177 (HR).

Belongs to the HAM1 NTPase family. In terms of assembly, homodimer. The cofactor is Mg(2+). It depends on Mn(2+) as a cofactor.

Its subcellular location is the cytoplasm. It catalyses the reaction ITP + H2O = IMP + diphosphate + H(+). The catalysed reaction is dITP + H2O = dIMP + diphosphate + H(+). It carries out the reaction XTP + H2O = XMP + diphosphate + H(+). In terms of biological role, pyrophosphatase that hydrolyzes non-canonical purine nucleotides such as inosine triphosphate (ITP), deoxyinosine triphosphate (dITP) or xanthosine 5'-triphosphate (XTP) to their respective monophosphate derivatives. The enzyme does not distinguish between the deoxy- and ribose forms. Probably excludes non-canonical purines from RNA and DNA precursor pools, thus preventing their incorporation into RNA and DNA and avoiding chromosomal lesions. The protein is Inosine triphosphate pyrophosphatase of Zea mays (Maize).